The primary structure comprises 108 residues: Glutaredoxin 4 (108 aa).

The 103-residue stretch at 4-106 folds into the Glutaredoxin domain; it reads FQKIKKQIQD…KLILKVKKKY (103 aa). K21 contributes to the glutathione binding site. C29 lines the [2Fe-2S] cluster pocket. Glutathione contacts are provided by residues R58, F70, and 83–84; that span reads CS.

The protein belongs to the glutaredoxin family. Monothiol subfamily. As to quaternary structure, homodimer.

The protein resides in the cytoplasm. Functionally, monothiol glutaredoxin involved in the biogenesis of iron-sulfur clusters. The sequence is that of Glutaredoxin 4 (grxD) from Buchnera aphidicola subsp. Acyrthosiphon pisum (strain APS) (Acyrthosiphon pisum symbiotic bacterium).